Here is a 77-residue protein sequence, read N- to C-terminus: Small integral membrane protein 5 (77 aa).

The helical transmembrane segment at 32–52 threads the bilayer; it reads IVAFSVIILFTATVLLLLLIA.

The protein localises to the membrane. This chain is Small integral membrane protein 5 (SMIM5), found in Homo sapiens (Human).